A 481-amino-acid chain; its full sequence is Cytochrome P450 monooygenase 2 (481 aa).

A helical membrane pass occupies residues 12 to 32 (GSQLLPFYIAIFVFTLVPWAI). Residue Cys-418 coordinates heme.

This sequence belongs to the cytochrome P450 family. Heme is required as a cofactor.

Its subcellular location is the membrane. The protein operates within plant hormone biosynthesis; gibberellin biosynthesis. Functionally, gibberellin 20-oxidase; part of the gene cluster that mediates the biosynthesis of gibberellins (GAs), diterpenoids that may provide a selective advantage during infection of the preferred host plant, rice. Gibberellins (GAs) are diterpenoids and are synthesized via the mevalonate pathway. Biosynthesis of the major metabolite GA3 (gibberellic acid) from geranylgeranyl diphosphate (GGPP) requires 13 steps. The GGPP produced by the geranylgeranyl diphosphate synthase GGS2 is converted to ent-kaurene via ent-copalyldiphosphate in a two-step cyclization reaction performed by the bifunctional ent-copalyl diphosphate synthase/ent-kaurene synthase enzyme (CPS/KS). Ent-Kaurene is metabolized to GAs by a series of oxidation reactions catalyzed by cytochrome P450 monooxygenases. Cytochrome P450 monooxygenase P450-4 is an ent-kaurene oxidase that catalyzes the three oxidation steps between ent-kaurene and ent-kaurenoic acid. The highly multifunctional cytochrome P450 monooxygenase P450-1 then catalyzes four steps involving oxidation at two carbon atoms, in the main pathway from ent-kaurenoic acid to GA14 via GA12-aldehyde as well as producing kaurenolides and fujenoic acids as by-products. The cytochrome P450 monooxygenase P450-2 then converts GA14 to GA4 by removal of C-20. GA4 is further converted to GA7 by the GA4 desaturase DES via 1,2-desaturation before cytochrome P450 monooxygenase P450-3, a 13-hydroxylase, hydroxylates GA7 to GA3, the final product of the GA-biosynthetic pathway. This chain is Cytochrome P450 monooygenase 2, found in Gibberella fujikuroi (strain CBS 195.34 / IMI 58289 / NRRL A-6831) (Bakanae and foot rot disease fungus).